The following is a 444-amino-acid chain: C4-dicarboxylate transport protein (444 aa).

9 helical membrane-spanning segments follow: residues 21–41 (HLYV…HFYP), 57–77 (LVKM…IAGM), 92–112 (IYFL…ANVV), 161–181 (GDIL…ALVG), 201–221 (LVSI…AFTI), 234–254 (LLIG…LGAV), 320–340 (IYMT…LSLS), 345–365 (LLLV…AGFI), and 368–388 (AATL…ILGI).

The protein belongs to the dicarboxylate/amino acid:cation symporter (DAACS) (TC 2.A.23) family.

It is found in the cell inner membrane. In terms of biological role, responsible for the transport of dicarboxylates such as succinate, fumarate, and malate from the periplasm across the membrane. The polypeptide is C4-dicarboxylate transport protein (Brucella anthropi (strain ATCC 49188 / DSM 6882 / CCUG 24695 / JCM 21032 / LMG 3331 / NBRC 15819 / NCTC 12168 / Alc 37) (Ochrobactrum anthropi)).